The sequence spans 360 residues: DNA replication and repair protein RecF (360 aa).

ATP is bound at residue 33 to 40; sequence GENGSGKT.

The protein belongs to the RecF family.

The protein resides in the cytoplasm. Functionally, the RecF protein is involved in DNA metabolism; it is required for DNA replication and normal SOS inducibility. RecF binds preferentially to single-stranded, linear DNA. It also seems to bind ATP. The sequence is that of DNA replication and repair protein RecF from Rickettsia bellii (strain OSU 85-389).